The chain runs to 441 residues: tRNA-2-methylthio-N(6)-dimethylallyladenosine synthase (441 aa).

The MTTase N-terminal domain occupies 5–121; the sequence is KKLYLETFGC…LQGMVAAAEE (117 aa). [4Fe-4S] cluster-binding residues include cysteine 14, cysteine 50, cysteine 84, cysteine 159, cysteine 163, and cysteine 166. One can recognise a Radical SAM core domain in the interval 145 to 375; sequence AEGGVTRFVT…QAAQKKTTLA (231 aa). The region spanning 378-440 is the TRAM domain; that stretch reads RSLEGTVQKV…QTLLKGEIVH (63 aa).

This sequence belongs to the methylthiotransferase family. MiaB subfamily. In terms of assembly, monomer. The cofactor is [4Fe-4S] cluster.

Its subcellular location is the cytoplasm. It catalyses the reaction N(6)-dimethylallyladenosine(37) in tRNA + (sulfur carrier)-SH + AH2 + 2 S-adenosyl-L-methionine = 2-methylsulfanyl-N(6)-dimethylallyladenosine(37) in tRNA + (sulfur carrier)-H + 5'-deoxyadenosine + L-methionine + A + S-adenosyl-L-homocysteine + 2 H(+). Functionally, catalyzes the methylthiolation of N6-(dimethylallyl)adenosine (i(6)A), leading to the formation of 2-methylthio-N6-(dimethylallyl)adenosine (ms(2)i(6)A) at position 37 in tRNAs that read codons beginning with uridine. This chain is tRNA-2-methylthio-N(6)-dimethylallyladenosine synthase, found in Citrifermentans bemidjiense (strain ATCC BAA-1014 / DSM 16622 / JCM 12645 / Bem) (Geobacter bemidjiensis).